An 834-amino-acid polypeptide reads, in one-letter code: Translation factor GUF1 homolog, mitochondrial (834 aa).

The N-terminal 66 residues, 1 to 66 (MKLCGVRSSG…RPLLAEPRRY (66 aa)), are a transit peptide targeting the mitochondrion. In terms of domain architecture, tr-type G spans 129–314 (ACIRNVSVVA…HIIDKVPPPC (186 aa)). GTP is bound by residues 138–145 (AHVDHGKT), 205–209 (DTPGH), and 259–262 (TKMD). Disordered regions lie at residues 363 to 385 (GAAS…ASGG) and 476 to 507 (TGSP…SSSV). Residues 488-507 (ATAAETASSDDASGSGSSSV) show a composition bias toward low complexity.

Belongs to the TRAFAC class translation factor GTPase superfamily. Classic translation factor GTPase family. LepA subfamily.

The protein localises to the mitochondrion inner membrane. The enzyme catalyses GTP + H2O = GDP + phosphate + H(+). Promotes mitochondrial protein synthesis. May act as a fidelity factor of the translation reaction, by catalyzing a one-codon backward translocation of tRNAs on improperly translocated ribosomes. Binds to mitochondrial ribosomes in a GTP-dependent manner. This chain is Translation factor GUF1 homolog, mitochondrial, found in Leishmania infantum.